The following is a 152-amino-acid chain: B3 domain-containing protein At1g10455 (152 aa).

Positions 24-131 form a DNA-binding region, TF-B3; it reads LKKKLSDSDL…EVKFKHFKSQ (108 aa).

The protein localises to the nucleus. The protein is B3 domain-containing protein At1g10455 of Arabidopsis thaliana (Mouse-ear cress).